The primary structure comprises 551 residues: FGGY carbohydrate kinase domain-containing protein (551 aa).

Belongs to the FGGY kinase family. As to expression, expressed in kidney, lung and small intestine and to a lower extent in liver and detected in cerebrospinal fluid (at protein level).

It catalyses the reaction D-ribulose + ATP = D-ribulose 5-phosphate + ADP + H(+). It participates in carbohydrate metabolism; pentose and glucuronate interconversion. Catalyzes ATP-dependent phosphorylation of D-ribulose at C-5 to form D-ribulose 5-phosphate. Postulated to function in a metabolite repair mechanism by preventing toxic accumulation of free D-ribulose formed by non-specific phosphatase activities. Alternatively, may play a role in regulating D-ribulose 5-phosphate recycling in the pentose phosphate pathway. Can phosphorylate ribitol with low efficiency. This is FGGY carbohydrate kinase domain-containing protein from Homo sapiens (Human).